A 245-amino-acid polypeptide reads, in one-letter code: Carboxymethylenebutenolidase homolog (245 aa).

Position 2 is an N-acetylalanine (alanine 2). At lysine 36 the chain carries N6-acetyllysine. Residues cysteine 132, aspartate 179, and histidine 212 contribute to the active site. At serine 223 the chain carries Phosphoserine.

It belongs to the dienelactone hydrolase family.

Its subcellular location is the cytoplasm. The protein localises to the cytosol. In terms of biological role, cysteine hydrolase. In Pongo abelii (Sumatran orangutan), this protein is Carboxymethylenebutenolidase homolog (CMBL).